We begin with the raw amino-acid sequence, 698 residues long: Elongation factor G 1 (698 aa).

A tr-type G domain is found at 8–290 (ERYRNIGICA…AVVEFLPAPV (283 aa)). GTP contacts are provided by residues 17–24 (AHVDAGKT), 88–92 (DTPGH), and 142–145 (NKMD).

The protein belongs to the TRAFAC class translation factor GTPase superfamily. Classic translation factor GTPase family. EF-G/EF-2 subfamily.

It is found in the cytoplasm. Its function is as follows. Catalyzes the GTP-dependent ribosomal translocation step during translation elongation. During this step, the ribosome changes from the pre-translocational (PRE) to the post-translocational (POST) state as the newly formed A-site-bound peptidyl-tRNA and P-site-bound deacylated tRNA move to the P and E sites, respectively. Catalyzes the coordinated movement of the two tRNA molecules, the mRNA and conformational changes in the ribosome. The polypeptide is Elongation factor G 1 (Shewanella sp. (strain MR-4)).